Consider the following 366-residue polypeptide: tRNA/tmRNA (uracil-C(5))-methyltransferase (366 aa).

Residues Gln-190, Tyr-218, Asn-223, Glu-239, and Asp-299 each coordinate S-adenosyl-L-methionine. Cys-324 serves as the catalytic Nucleophile. The active-site Proton acceptor is Glu-358.

This sequence belongs to the class I-like SAM-binding methyltransferase superfamily. RNA M5U methyltransferase family. TrmA subfamily.

The catalysed reaction is uridine(54) in tRNA + S-adenosyl-L-methionine = 5-methyluridine(54) in tRNA + S-adenosyl-L-homocysteine + H(+). It carries out the reaction uridine(341) in tmRNA + S-adenosyl-L-methionine = 5-methyluridine(341) in tmRNA + S-adenosyl-L-homocysteine + H(+). Functionally, dual-specificity methyltransferase that catalyzes the formation of 5-methyluridine at position 54 (m5U54) in all tRNAs, and that of position 341 (m5U341) in tmRNA (transfer-mRNA). The sequence is that of tRNA/tmRNA (uracil-C(5))-methyltransferase from Shigella flexneri serotype 5b (strain 8401).